A 362-amino-acid chain; its full sequence is Tyrosine recombinase XerH (362 aa).

In terms of domain architecture, Core-binding (CB) spans 43-140; sequence ECLNELNQAC…ALLGLFSYID (98 aa). One can recognise a Tyr recombinase domain in the interval 170-357; sequence KLPTHLNNEE…DKQRLEEAAS (188 aa). Catalysis depends on residues Arg-213, Lys-239, His-309, Arg-312, and His-335. Tyr-344 serves as the catalytic O-(3'-phospho-DNA)-tyrosine intermediate.

This sequence belongs to the 'phage' integrase family. XerH subfamily.

It is found in the cytoplasm. Its activity is regulated as follows. FtsK is required for recombination. In terms of biological role, site-specific tyrosine recombinase, which acts by catalyzing the cutting and rejoining of the recombining DNA molecules. Involved in chromosome segregation. May contribute to chromosome decatenation. The sequence is that of Tyrosine recombinase XerH from Helicobacter pylori (strain ATCC 700392 / 26695) (Campylobacter pylori).